Consider the following 397-residue polypeptide: RNA pseudouridine synthase 5 (397 aa).

An S4 RNA-binding domain is found at 64-114 (APLPGWIKRIRDGQITVDGEVATDPDMILREGSKLVYHRLPWQEPFAPHLL).

It belongs to the pseudouridine synthase RluA family.

It catalyses the reaction a uridine in RNA = a pseudouridine in RNA. In Oryza sativa subsp. japonica (Rice), this protein is RNA pseudouridine synthase 5.